A 138-amino-acid polypeptide reads, in one-letter code: Acidic phospholipase A2 Cvv-E6a (138 aa).

A signal peptide spans 1–16 (MRTLWIVAVLLLGVEG). 7 disulfide bridges follow: Cys-42–Cys-131, Cys-44–Cys-60, Cys-59–Cys-111, Cys-65–Cys-138, Cys-66–Cys-104, Cys-73–Cys-97, and Cys-91–Cys-102. Residues Tyr-43, Gly-45, and Gly-47 each contribute to the Ca(2+) site. Residue His-63 is part of the active site. Residue Asp-64 coordinates Ca(2+). The active site involves Asp-105.

Belongs to the phospholipase A2 family. Group II subfamily. D49 sub-subfamily. Ca(2+) serves as cofactor. Expressed by the venom gland.

It is found in the secreted. It carries out the reaction a 1,2-diacyl-sn-glycero-3-phosphocholine + H2O = a 1-acyl-sn-glycero-3-phosphocholine + a fatty acid + H(+). Snake venom phospholipase A2 (PLA2) that significantly inhibits ADP-induced platelet aggregation in platelet-rich plasma of human, rabbit and guinea pig. PLA2 catalyzes the calcium-dependent hydrolysis of the 2-acyl groups in 3-sn-phosphoglycerides. This chain is Acidic phospholipase A2 Cvv-E6a, found in Crotalus viridis viridis (Prairie rattlesnake).